Reading from the N-terminus, the 273-residue chain is NADPH-dependent 7-cyano-7-deazaguanine reductase (273 aa).

Substrate is bound at residue 80–82 (IES). Position 82 to 83 (82 to 83 (SK)) interacts with NADPH. The active-site Thioimide intermediate is the Cys-180. The active-site Proton donor is Asp-187. 219-220 (HE) contacts substrate. 248–249 (RG) provides a ligand contact to NADPH.

Belongs to the GTP cyclohydrolase I family. QueF type 2 subfamily. As to quaternary structure, homodimer.

Its subcellular location is the cytoplasm. The enzyme catalyses 7-aminomethyl-7-carbaguanine + 2 NADP(+) = 7-cyano-7-deazaguanine + 2 NADPH + 3 H(+). The protein operates within tRNA modification; tRNA-queuosine biosynthesis. In terms of biological role, catalyzes the NADPH-dependent reduction of 7-cyano-7-deazaguanine (preQ0) to 7-aminomethyl-7-deazaguanine (preQ1). This is NADPH-dependent 7-cyano-7-deazaguanine reductase from Bordetella avium (strain 197N).